The following is a 1103-amino-acid chain: Isoleucine--tRNA ligase (1103 aa).

The 'HIGH' region motif lies at 53–63; sequence PFANGLPHYGH. The short motif at 628 to 632 is the 'KMSKS' region element; it reads KLSKR. Lys631 lines the ATP pocket.

Belongs to the class-I aminoacyl-tRNA synthetase family. IleS type 2 subfamily. Monomer. The cofactor is Zn(2+).

It is found in the cytoplasm. It carries out the reaction tRNA(Ile) + L-isoleucine + ATP = L-isoleucyl-tRNA(Ile) + AMP + diphosphate. Catalyzes the attachment of isoleucine to tRNA(Ile). As IleRS can inadvertently accommodate and process structurally similar amino acids such as valine, to avoid such errors it has two additional distinct tRNA(Ile)-dependent editing activities. One activity is designated as 'pretransfer' editing and involves the hydrolysis of activated Val-AMP. The other activity is designated 'posttransfer' editing and involves deacylation of mischarged Val-tRNA(Ile). In Rickettsia akari (strain Hartford), this protein is Isoleucine--tRNA ligase.